The chain runs to 711 residues: Ribosomal RNA large subunit methyltransferase K/L (711 aa).

The region spanning 43-154 is the THUMP domain; that stretch reads LAYRITLWSR…RGQITLGINF (112 aa).

It belongs to the methyltransferase superfamily. RlmKL family.

The protein resides in the cytoplasm. The catalysed reaction is guanosine(2445) in 23S rRNA + S-adenosyl-L-methionine = N(2)-methylguanosine(2445) in 23S rRNA + S-adenosyl-L-homocysteine + H(+). The enzyme catalyses guanosine(2069) in 23S rRNA + S-adenosyl-L-methionine = N(2)-methylguanosine(2069) in 23S rRNA + S-adenosyl-L-homocysteine + H(+). In terms of biological role, specifically methylates the guanine in position 2445 (m2G2445) and the guanine in position 2069 (m7G2069) of 23S rRNA. This chain is Ribosomal RNA large subunit methyltransferase K/L, found in Shewanella loihica (strain ATCC BAA-1088 / PV-4).